A 430-amino-acid polypeptide reads, in one-letter code: MKTQMNYAKEGIFTKEMQIVAQKENLSKDFLLENIACGKIIIPANINHKSLDPNGIGFGLRTKVNVNLGVSNDCVDYSEEMKKVELAHKFGIEAIMDLSNYGKTSRFRDELVNVSKAMIGTVPVYDAVGFLEKDLKQINAKDFLDVVYHHAKSGVDFMTIHAGINSRAAHIFKQSKRLTNIVSRGGSVLYAWMMMKDAENPFFEYYDDLLDICLKYDVTLSLGDALRPGSTHDASDGAQISELIELSLLTQRAWDVGIQVMIEGPGHMAINEIEANMQLEKRLCKGAPFYVLGPLVTDIGAGYDHISGAIGGAVAAASGADMLCYVTPAEHLRLPNLEDVREGIVATKIAAHAGDIAKLPKERARDDEMSKARQEIDWEKMFKLAIDGEKAKKMFNERRPDDLNSCSMCGKMCAMNTMNQILKGEDVSLA.

Substrate is bound by residues Asn-67, Met-96, Tyr-125, His-161, 183 to 185 (SRG), 224 to 227 (DALR), and Glu-263. A Zn(2+)-binding site is contributed by His-267. Tyr-290 is a substrate binding site. His-331 lines the Zn(2+) pocket. [4Fe-4S] cluster-binding residues include Cys-406, Cys-409, and Cys-413.

This sequence belongs to the ThiC family. Homodimer. Requires [4Fe-4S] cluster as cofactor.

The enzyme catalyses 5-amino-1-(5-phospho-beta-D-ribosyl)imidazole + S-adenosyl-L-methionine = 4-amino-2-methyl-5-(phosphooxymethyl)pyrimidine + CO + 5'-deoxyadenosine + formate + L-methionine + 3 H(+). The protein operates within cofactor biosynthesis; thiamine diphosphate biosynthesis. Functionally, catalyzes the synthesis of the hydroxymethylpyrimidine phosphate (HMP-P) moiety of thiamine from aminoimidazole ribotide (AIR) in a radical S-adenosyl-L-methionine (SAM)-dependent reaction. The sequence is that of Phosphomethylpyrimidine synthase from Campylobacter jejuni subsp. jejuni serotype O:2 (strain ATCC 700819 / NCTC 11168).